The primary structure comprises 317 residues: Malate dehydrogenase (317 aa).

NAD(+) contacts are provided by residues 10 to 15 (GGGQIG) and Asp-34. Positions 83 and 89 each coordinate substrate. NAD(+)-binding positions include Asn-96 and 119-121 (ISN). Substrate contacts are provided by Asn-121 and Arg-152. His-176 serves as the catalytic Proton acceptor.

This sequence belongs to the LDH/MDH superfamily. MDH type 3 family.

The enzyme catalyses (S)-malate + NAD(+) = oxaloacetate + NADH + H(+). In terms of biological role, catalyzes the reversible oxidation of malate to oxaloacetate. The polypeptide is Malate dehydrogenase (Geobacter sulfurreducens (strain ATCC 51573 / DSM 12127 / PCA)).